We begin with the raw amino-acid sequence, 1045 residues long: MIEWIIRRSVANRFLVLMGALFLSIWGTWTIINTPVDALPDLSDVQVIIKTSYPGQAPQIVENQVTYPLTTTMLSVPGAKTVRGFSQFGDSYVYVIFEDGTDPYWARSRVLEYLNQVQGKLPAGVSAELGPDATGVGWIYEYALVDRSGKHDLADLRSLQDWFLKYELKTIPDVAEVASVGGVVKEYQVVIDPQRLAQYGISLAEVKSALDASNQEAGGSSIELAEAEYMVRASGYLQTLDDFNHIVLKASENGVPVYLRDVAKIQVGPEMRRGIAELNGEVVGGVVILRSGKNAREVIAAVKDKLETLKSSLPEGVEIVTTYDRSQLIDRAIDNLSGKLLEEFIVVAVVCALFLWHVRSALVAIISLPLGLCIAFIVMHFQGLNANIMSLGGIAIAVGAMVDAAIVMIENAHKRLEEWQHQHPDATLDNKTRWQVITNASVEVGPALFISLLIITLSFIPIFTLEGQEGRLFGPLAFTKTYAMAGAALLAIVVIPILMGYWIRGKIPPESSNPLNRFLIRVYHPLLLKVLHWPKTTLLVAALSVLTVLWPLNKVGGEFLPQINEGDLLYMPSTLPGISAAEAASMLQKTDKLIMSVPEVARVFGKTGKAETATDSAPLEMVETTIQLKPQEQWRPGMTMDKIIEELDNTVRLPGLANLWVPPIRNRIDMLSTGIKSPIGIKVSGTVLADIDAMAEQIEEVARTVPGVASALAERLEGGRYINVEINREKAARYGMTVADVQLFVTSAVGGAMVGETVEGIARYPINLRYPQSWRDSPQALRQLPILTPMKQQITLADVADVKVSTGPSMLKTENARPTSWIYIDARDRDMVSVVHDLQKAIAEKVQLKPGTSVAFSGQFELLERANHKLKLMVPMTLMIIFVLLYLAFRRVGEALLIISSVPFALVGGIWLLWWMGFHLSVATGTGFIALAGVAAEFGVVMLMYLRHAIEAEPSLNNPQTFSEQKLDEALHHGAVLRVRPKAMTVAVIIAGLLPILWGTGAGSEVMSRIAAPMIGGMITAPLLSLFIIPAAYKLMWLHRHRVRK.

12 helical membrane-spanning segments follow: residues 14–34, 336–356, 361–381, 388–408, 444–464, 483–503, 530–550, 869–889, 896–916, 926–946, 983–1003, and 1010–1030; these read FLVL…IINT, LSGK…LFLW, ALVA…VMHF, IMSL…AIVM, VGPA…PIFT, AMAG…GYWI, VLHW…TVLW, KLKL…YLAF, LLII…LWWM, TGFI…LMYL, AMTV…TGAG, and IAAP…FIIP.

The protein belongs to the resistance-nodulation-cell division (RND) (TC 2.A.6) family. In terms of assembly, the cus efflux system is composed of CusA, CusB, CusC and CusF.

It is found in the cell inner membrane. Its function is as follows. Part of a cation efflux system that mediates resistance to copper and silver. The polypeptide is Cation efflux system protein CusA (cusA) (Escherichia coli O157:H7).